Consider the following 195-residue polypeptide: 3-isopropylmalate dehydratase small subunit (195 aa).

It belongs to the LeuD family. LeuD type 1 subfamily. Heterodimer of LeuC and LeuD.

The enzyme catalyses (2R,3S)-3-isopropylmalate = (2S)-2-isopropylmalate. It functions in the pathway amino-acid biosynthesis; L-leucine biosynthesis; L-leucine from 3-methyl-2-oxobutanoate: step 2/4. Functionally, catalyzes the isomerization between 2-isopropylmalate and 3-isopropylmalate, via the formation of 2-isopropylmaleate. This Karelsulcia muelleri (strain GWSS) (Sulcia muelleri) protein is 3-isopropylmalate dehydratase small subunit.